A 648-amino-acid polypeptide reads, in one-letter code: 1-deoxy-D-xylulose-5-phosphate synthase (648 aa).

Thiamine diphosphate is bound by residues His72 and 113 to 115 (GHA). Mg(2+) is bound at residue Asp144. Thiamine diphosphate is bound by residues 145–146 (GA), Asn173, and Glu363. A Mg(2+)-binding site is contributed by Asn173.

The protein belongs to the transketolase family. DXPS subfamily. As to quaternary structure, homodimer. It depends on Mg(2+) as a cofactor. Thiamine diphosphate serves as cofactor.

The catalysed reaction is D-glyceraldehyde 3-phosphate + pyruvate + H(+) = 1-deoxy-D-xylulose 5-phosphate + CO2. Its pathway is metabolic intermediate biosynthesis; 1-deoxy-D-xylulose 5-phosphate biosynthesis; 1-deoxy-D-xylulose 5-phosphate from D-glyceraldehyde 3-phosphate and pyruvate: step 1/1. Its function is as follows. Catalyzes the acyloin condensation reaction between C atoms 2 and 3 of pyruvate and glyceraldehyde 3-phosphate to yield 1-deoxy-D-xylulose-5-phosphate (DXP). This is 1-deoxy-D-xylulose-5-phosphate synthase from Symbiobacterium thermophilum (strain DSM 24528 / JCM 14929 / IAM 14863 / T).